Here is a 498-residue protein sequence, read N- to C-terminus: O-methyltransferase OME1 (498 aa).

The segment covering 1-19 has biased composition (polar residues); sequence MSTMALHRTASTKSDTTMA. Disordered regions lie at residues 1–23 and 42–83; these read MSTM…CPNG and HRAE…QPEY. Low complexity predominate over residues 50 to 65; that stretch reads SSTSSVSTTPTSPSFS. Asp358 contributes to the S-adenosyl-L-methionine binding site. The active-site Proton acceptor is His406.

It belongs to the class I-like SAM-binding methyltransferase superfamily. Cation-independent O-methyltransferase family.

It participates in secondary metabolite biosynthesis. Its function is as follows. O-methyltransferase; part of the gene cluster that mediates the biosynthesis of a tyrosine-derived cytochalasan acting as a fungal signal recognized by resistant rice plants and leads to avirulence in Pi33 resistant rice cultivars. The first step in the pathway is catalyzed by the hybrid PKS-NRPS ACE1, assisted by the enoyl reductase RAP1, that are responsible for fusion of the tyrosine precursor and the polyketide backbone. The polyketide synthase module (PKS) of ACE1 is responsible for the synthesis of the polyketide backbone and the downstream nonribosomal peptide synthetase (NRPS) amidates the carboxyl end of the polyketide with the tyrosine precursor. Because ACE1 lacks a designated enoylreductase (ER) domain, the required activity is provided the enoyl reductase RAP1. Reduction by the hydrolyase ORFZ, followed by dehydration and intra-molecular Diels-Alder cyclization by the Diels-Alderase ORF3 then yield the required isoindolone-fused macrocycle. A number of oxidative steps catalyzed by the tailoring enzymes identified within the cluster, including cytochrome P450 monooxygenases CYP1 to CYP4, the FAD-linked oxidoreductase OXR2 and the short-chain dehydrogenase/reductase OXR1, are further required to afford the final cytochalasans that confer avirulence and which have still to be identified. The monooxygenase CYP1 has been shown to be a site-selective C-18 hydroxylase whereas the function of CYP3 is the site-selective epoxidation of the C-6/C-7 olefin that is present in some intermediate compounds. Finally, SYN2 and RAP2 are not required for avirulence in Pi33 resistant rice cultivars. The sequence is that of O-methyltransferase OME1 from Pyricularia oryzae (strain 70-15 / ATCC MYA-4617 / FGSC 8958) (Rice blast fungus).